The primary structure comprises 236 residues: Transcriptional activator protein SolR (236 aa).

The region spanning 169 to 234 is the HTH luxR-type domain; that stretch reads VPESNAVLTT…QAVVKAIATG (66 aa). The segment at residues 193 to 212 is a DNA-binding region (H-T-H motif); sequence AYEIGQILRISERTVNFHVN.

This sequence belongs to the autoinducer-regulated transcriptional regulatory protein family.

The chain is Transcriptional activator protein SolR (solR) from Ralstonia solanacearum (Pseudomonas solanacearum).